The following is a 254-amino-acid chain: MAATARRGWGAAAVAAGLRRRFCHMLKNPYTIKKQPLHQFVQRPLFPLPAAFYHPVRYMFIQTQDTPNPNSLKFIPGKPVLETRTMDFPTPAAAFRSPLARQLFRIEGVKSVFFGPDFITVTKENEELDWNLLKPDIYATIMDFFASGLPLVTEETPSGEAGSEEDDEVVAMIKELLDTRIRPTVQEDGGDVIYKGFEDGIVQLKLQGSCTSCPSSIITLKNGIQNMLQFYIPEVEGVEQVMDDESDEKEANSP.

The N-terminal 9 residues, 1-9 (MAATARRGW), are a transit peptide targeting the mitochondrion. The nifU stretch occupies residues 173–241 (IKELLDTRIR…IPEVEGVEQV (69 aa)). [4Fe-4S] cluster-binding residues include cysteine 210 and cysteine 213.

Belongs to the NifU family. Monomer and homohexamer; the apo-NFU1 is a monomer, while the holo-NFU1 is a hexamer composed of a trimer of dimer that is probably linked by some 4Fe-4S cluster. Interacts with HIRA and EPM2A/laforin. Interacts with BOLA3. Interacts with HSPA9. In terms of tissue distribution, ubiquitous. Expression in adult lung is weak compared to fetal lung.

The protein localises to the mitochondrion. It is found in the cytoplasm. It localises to the cytosol. Functionally, iron-sulfur cluster scaffold protein which can assemble [4Fe-4S] clusters and deliver them to target proteins. The polypeptide is NFU1 iron-sulfur cluster scaffold homolog, mitochondrial (NFU1) (Homo sapiens (Human)).